Consider the following 586-residue polypeptide: Dual specificity tyrosine-phosphorylation-regulated kinase 3 (586 aa).

The segment covering 1–13 (MGGAARERGRKDA) has biased composition (basic and acidic residues). A disordered region spans residues 1 to 187 (MGGAARERGR…QGVIGGPNNG (187 aa)). A Protein kinase domain is found at 208 to 521 (YEVLKIIGKG…PAQALRHPWI (314 aa)). Residues 214-222 (IGKGSFGQV), Lys237, and 287-290 (FELL) each bind ATP. Asp334 (proton acceptor) is an active-site residue. The residue at position 368 (Tyr368) is a Phosphotyrosine. Positions 467 to 480 (RSRRGKKRGPPGSK) match the Nuclear localization signal motif.

It belongs to the protein kinase superfamily. CMGC Ser/Thr protein kinase family. MNB/DYRK subfamily. As to quaternary structure, interacts with SIRT1. Requires Mg(2+) as cofactor. In terms of processing, protein kinase activity is activated following autophosphorylation at Tyr-368. Post-translationally, ubiquitinated at anaphase by the anaphase-promoting complex (APC/C), leading to its degradation by the proteasome. Expressed predominantly in testis. Expressed in late pachytene spermatocytes.

It localises to the nucleus. Its subcellular location is the cytoplasm. The protein localises to the nucleus speckle. The protein resides in the cytoplasmic granule. It is found in the cytoskeleton. It localises to the microtubule organizing center. Its subcellular location is the centrosome. The enzyme catalyses L-seryl-[protein] + ATP = O-phospho-L-seryl-[protein] + ADP + H(+). It catalyses the reaction L-threonyl-[protein] + ATP = O-phospho-L-threonyl-[protein] + ADP + H(+). The catalysed reaction is L-tyrosyl-[protein] + ATP = O-phospho-L-tyrosyl-[protein] + ADP + H(+). Protein kinase activity is activated following autophosphorylation at Tyr-368. Functionally, dual-specificity protein kinase that promotes disassembly of several types of membraneless organelles during mitosis, such as stress granules, nuclear speckles and pericentriolar material. Dual-specificity tyrosine-regulated kinases (DYRKs) autophosphorylate a critical tyrosine residue in their activation loop and phosphorylate their substrate on serine and threonine residues. Acts as a central dissolvase of membraneless organelles during the G2-to-M transition, after the nuclear-envelope breakdown: acts by mediating phosphorylation of multiple serine and threonine residues in unstructured domains of proteins, such as SRRM1 and PCM1. Does not mediate disassembly of all membraneless organelles: disassembly of P-body and nucleolus is not regulated by DYRK3. Dissolution of membraneless organelles at the onset of mitosis is also required to release mitotic regulators, such as ZNF207, from liquid-unmixed organelles where they are sequestered and keep them dissolved during mitosis. Regulates mTORC1 by mediating the dissolution of stress granules: during stressful conditions, DYRK3 partitions from the cytosol to the stress granule, together with mTORC1 components, which prevents mTORC1 signaling. When stress signals are gone, the kinase activity of DYRK3 is required for the dissolution of stress granule and mTORC1 relocation to the cytosol: acts by mediating the phosphorylation of the mTORC1 inhibitor AKT1S1, allowing full reactivation of mTORC1 signaling. Also acts as a negative regulator of EPO-dependent erythropoiesis: may place an upper limit on red cell production during stress erythropoiesis. Inhibits cell death due to cytokine withdrawal in hematopoietic progenitor cells. Promotes cell survival upon genotoxic stress through phosphorylation of SIRT1: this in turn inhibits p53/TP53 activity and apoptosis. This Rattus norvegicus (Rat) protein is Dual specificity tyrosine-phosphorylation-regulated kinase 3.